Reading from the N-terminus, the 557-residue chain is Dihydroxy-acid dehydratase (557 aa).

Asp-78 contacts Mg(2+). Residue Cys-119 participates in [2Fe-2S] cluster binding. Residues Asp-120 and Lys-121 each contribute to the Mg(2+) site. Lys-121 carries the N6-carboxylysine modification. Cys-192 is a [2Fe-2S] cluster binding site. Glu-446 serves as a coordination point for Mg(2+). The Proton acceptor role is filled by Ser-472.

It belongs to the IlvD/Edd family. In terms of assembly, homodimer. The cofactor is [2Fe-2S] cluster. Mg(2+) serves as cofactor.

The catalysed reaction is (2R)-2,3-dihydroxy-3-methylbutanoate = 3-methyl-2-oxobutanoate + H2O. It carries out the reaction (2R,3R)-2,3-dihydroxy-3-methylpentanoate = (S)-3-methyl-2-oxopentanoate + H2O. Its pathway is amino-acid biosynthesis; L-isoleucine biosynthesis; L-isoleucine from 2-oxobutanoate: step 3/4. It participates in amino-acid biosynthesis; L-valine biosynthesis; L-valine from pyruvate: step 3/4. Functionally, functions in the biosynthesis of branched-chain amino acids. Catalyzes the dehydration of (2R,3R)-2,3-dihydroxy-3-methylpentanoate (2,3-dihydroxy-3-methylvalerate) into 2-oxo-3-methylpentanoate (2-oxo-3-methylvalerate) and of (2R)-2,3-dihydroxy-3-methylbutanoate (2,3-dihydroxyisovalerate) into 2-oxo-3-methylbutanoate (2-oxoisovalerate), the penultimate precursor to L-isoleucine and L-valine, respectively. The chain is Dihydroxy-acid dehydratase from Campylobacter fetus subsp. fetus (strain 82-40).